The chain runs to 398 residues: tRNA-specific 2-thiouridylase MnmA (398 aa).

Residues 18 to 25 and Leu44 contribute to the ATP site; that span reads AMSGGVDS. The Nucleophile role is filled by Cys112. Cysteines 112 and 213 form a disulfide. Residue Gly136 participates in ATP binding. Residues 163 to 165 form an interaction with tRNA region; it reads RDQ. Catalysis depends on Cys213, which acts as the Cysteine persulfide intermediate.

It belongs to the MnmA/TRMU family.

It is found in the cytoplasm. It catalyses the reaction S-sulfanyl-L-cysteinyl-[protein] + uridine(34) in tRNA + AH2 + ATP = 2-thiouridine(34) in tRNA + L-cysteinyl-[protein] + A + AMP + diphosphate + H(+). Catalyzes the 2-thiolation of uridine at the wobble position (U34) of tRNA, leading to the formation of s(2)U34. This chain is tRNA-specific 2-thiouridylase MnmA, found in Sinorhizobium fredii (strain NBRC 101917 / NGR234).